The chain runs to 59 residues: ATP synthase subunit J, mitochondrial (59 aa).

Residues 9-25 traverse the membrane as a helical segment; the sequence is ILKVYWPFFVAGAAVYY.

It belongs to the ATPase j subunit family. As to quaternary structure, F-type ATPases have 2 components, CF(1) - the catalytic core - and CF(0) - the membrane proton channel. In yeast, the dimeric form of ATP synthase consists of 17 polypeptides: alpha, beta, gamma, delta, epsilon, 4 (B), 5 (OSCP), 6 (A), 8, 9 (C), d, E (Tim11), f, g, h, i/j and k.

The protein resides in the mitochondrion membrane. Functionally, mitochondrial membrane ATP synthase (F(1)F(0) ATP synthase or Complex V) produces ATP from ADP in the presence of a proton gradient across the membrane which is generated by electron transport complexes of the respiratory chain. F-type ATPases consist of two structural domains, F(1) - containing the extramembraneous catalytic core and F(0) - containing the membrane proton channel, linked together by a central stalk and a peripheral stalk. During catalysis, ATP synthesis in the catalytic domain of F(1) is coupled via a rotary mechanism of the central stalk subunits to proton translocation. Part of the complex F(0) domain. Minor subunit located with subunit a in the membrane. The chain is ATP synthase subunit J, mitochondrial (ATP18) from Saccharomyces cerevisiae (strain ATCC 204508 / S288c) (Baker's yeast).